A 316-amino-acid polypeptide reads, in one-letter code: RING finger protein 148 (316 aa).

Positions M1 to G12 are cleaved as a signal peptide. N56 carries N-linked (GlcNAc...) asparagine glycosylation. Residues V84–H178 form the PA domain. The next 2 helical transmembrane spans lie at G173–G193 and V204–W224. The RING-type; atypical zinc-finger motif lies at C269–K310.

The protein resides in the membrane. In Mus musculus (Mouse), this protein is RING finger protein 148 (Rnf148).